The following is a 117-amino-acid chain: Small ribosomal subunit protein bS6 (117 aa).

Residues 92-117 (KVDEHPEGPSIQMQKREERDNRRERR) form a disordered region. The span at 105–117 (QKREERDNRRERR) shows a compositional bias: basic and acidic residues.

This sequence belongs to the bacterial ribosomal protein bS6 family.

Binds together with bS18 to 16S ribosomal RNA. In Dinoroseobacter shibae (strain DSM 16493 / NCIMB 14021 / DFL 12), this protein is Small ribosomal subunit protein bS6.